The chain runs to 233 residues: Small ribosomal subunit protein uS3 (233 aa).

Positions Val39 to Arg107 constitute a KH type-2 domain.

The protein belongs to the universal ribosomal protein uS3 family. As to quaternary structure, part of the 30S ribosomal subunit. Forms a tight complex with proteins S10 and S14.

In terms of biological role, binds the lower part of the 30S subunit head. Binds mRNA in the 70S ribosome, positioning it for translation. The polypeptide is Small ribosomal subunit protein uS3 (Edwardsiella ictaluri (strain 93-146)).